Consider the following 95-residue polypeptide: UPF0213 protein PEPE_0875 (95 aa).

The GIY-YIG domain occupies 7-82; the sequence is NGFYFYVLRC…KQRTRSSKIK (76 aa).

This sequence belongs to the UPF0213 family.

This chain is UPF0213 protein PEPE_0875, found in Pediococcus pentosaceus (strain ATCC 25745 / CCUG 21536 / LMG 10740 / 183-1w).